The sequence spans 301 residues: uncharacterized protein (301 aa).

9 helical membrane-spanning segments follow: residues 1–21 (MSWIIFYTVIAALLVLDLGIV), 33–53 (SVLFSLFYFVIACLFGIYFYY), 72–92 (AMSLDNIFVISIIFQFFKIPG), 101–121 (FGIIGVIIFRAIMIYGGTILI), 124–144 (FAWLLYIFAVILIATGIKTFY), 185–205 (YFTPLFISLVLIEAIDLVFAI), 220–240 (IIYTSNIFAILGLRALFFCLA), 246–266 (FSYIKYSLALILIFIGFKIFI), and 270–290 (IAIPAYVSLIVTITLLLFGII).

The protein belongs to the TerC family.

The protein localises to the cell membrane. This is an uncharacterized protein from Rickettsia felis (strain ATCC VR-1525 / URRWXCal2) (Rickettsia azadi).